The following is a 113-amino-acid chain: Hydrogenase maturation factor HypA (113 aa).

Position 2 (histidine 2) interacts with Ni(2+). 4 residues coordinate Zn(2+): cysteine 73, cysteine 76, cysteine 89, and cysteine 92.

It belongs to the HypA/HybF family.

In terms of biological role, involved in the maturation of [NiFe] hydrogenases. Required for nickel insertion into the metal center of the hydrogenase. In Paracoccus denitrificans (strain Pd 1222), this protein is Hydrogenase maturation factor HypA.